Consider the following 353-residue polypeptide: MIEEIQKLNGFIVIDKPQGPTSHQVDYWVRQILGTEKVGHIGTLDPNVTGVLVMAIGKAVRLIDVVHEKPKEYVGVMRFHSDISEEEVREVFRKFTTRIYQLPPVRSAVSRKVRIKTIYELDMIEKKDKIVLFHVKCESGTYIRTLCTDIGYVSGKGGQMVDLRRISTGPFKEDIAITLQDLQAYVDLAKEGKDELFRSHFLDMTYAFIDYPKIVAKKSAVENIAHGSDLYVGGVKLIDGNFQKGDRVCVLSEDNELLGTGIARCDSSNLFMKVVDFDHIFVEAKHGKGDVVRDREKDVQRPGQQVHRNIRDAAHGPDSRTGRGRKETGPQIAPNRVRKLQNKTGVHRRPGSH.

Asp-45 functions as the Nucleophile in the catalytic mechanism. In terms of domain architecture, PUA spans 211 to 287 (YPKIVAKKSA…DHIFVEAKHG (77 aa)). Residues 292–353 (VRDREKDVQR…TGVHRRPGSH (62 aa)) form a disordered region. Over residues 309–328 (NIRDAAHGPDSRTGRGRKET) the composition is skewed to basic and acidic residues. The span at 336-353 (RVRKLQNKTGVHRRPGSH) shows a compositional bias: basic residues.

The protein belongs to the pseudouridine synthase TruB family. Type 2 subfamily.

It catalyses the reaction uridine(55) in tRNA = pseudouridine(55) in tRNA. Its function is as follows. Could be responsible for synthesis of pseudouridine from uracil-55 in the psi GC loop of transfer RNAs. This is Probable tRNA pseudouridine synthase B from Thermoplasma volcanium (strain ATCC 51530 / DSM 4299 / JCM 9571 / NBRC 15438 / GSS1).